The primary structure comprises 44 residues: Photosystem I reaction center subunit IX (44 aa).

A helical membrane pass occupies residues 7–27 (YLSVAPVLSTLWFGALAGLLI).

Belongs to the PsaJ family.

It is found in the plastid. The protein localises to the chloroplast thylakoid membrane. In terms of biological role, may help in the organization of the PsaE and PsaF subunits. In Solanum bulbocastanum (Wild potato), this protein is Photosystem I reaction center subunit IX.